The following is a 343-amino-acid chain: Protein pelota homolog (343 aa).

It belongs to the eukaryotic release factor 1 family. Pelota subfamily. Monomer. The cofactor is a divalent metal cation.

The protein localises to the cytoplasm. Functionally, may function in recognizing stalled ribosomes, interact with stem-loop structures in stalled mRNA molecules, and effect endonucleolytic cleavage of the mRNA. May play a role in the release non-functional ribosomes and degradation of damaged mRNAs. Has endoribonuclease activity. The sequence is that of Protein pelota homolog from Cenarchaeum symbiosum (strain A).